A 207-amino-acid polypeptide reads, in one-letter code: Protein TEX261 homolog (207 aa).

The next 4 helical transmembrane spans lie at 2–22, 54–74, 94–114, and 126–146; these read FLSLLILLSYALGFVFCVVCL, IIFLLGIFEDLDFTSLLFSFI, YKFILSVLSFIISHISWFIYF, and IIAIFTFCVWLIPLIFFISLA.

Belongs to the SVP26 family.

The protein localises to the membrane. The sequence is that of Protein TEX261 homolog from Dictyostelium discoideum (Social amoeba).